A 609-amino-acid polypeptide reads, in one-letter code: Putative 4-coumarate--CoA ligase-like 8 (609 aa).

ATP-binding residues include Ser-194, Ser-195, Gly-196, Thr-197, Thr-198, and Lys-202. Positions 252 and 256 each coordinate (E)-4-coumaroyl-AMP. Arg-274 is a binding site for CoA. An SBD1 region spans residues 276-348; the sequence is SVEKTMAAVE…SCFPAVNLGQ (73 aa). Residues Gly-326, Gln-348, Thr-353, and Met-361 each coordinate (E)-4-coumaroyl-AMP. ATP contacts are provided by Gln-348 and Thr-353. Residues 349–450 are SBD2; that stretch reads CYGLTETTGI…VRGPSTMRGY (102 aa). Residues Asp-482 and Arg-497 each contribute to the ATP site. Lys-499 and Lys-503 together coordinate (E)-4-coumaroyl-AMP. Ala-506 is a CoA binding site. Lys-589 contributes to the ATP binding site.

This sequence belongs to the ATP-dependent AMP-binding enzyme family. Requires Mg(2+) as cofactor.

The enzyme catalyses (E)-4-coumarate + ATP + CoA = (E)-4-coumaroyl-CoA + AMP + diphosphate. It carries out the reaction (E)-4-coumarate + ATP + H(+) = (E)-4-coumaroyl-AMP + diphosphate. It catalyses the reaction (E)-4-coumaroyl-AMP + CoA = (E)-4-coumaroyl-CoA + AMP + H(+). Its function is as follows. Carboxylate--CoA ligase that may use 4-coumarate as substrate. Follows a two-step reaction mechanism, wherein the carboxylate substrate first undergoes adenylation by ATP, followed by a thioesterification in the presence of CoA to yield the final CoA thioester. The chain is Putative 4-coumarate--CoA ligase-like 8 (4CLL8) from Oryza sativa subsp. japonica (Rice).